Reading from the N-terminus, the 281-residue chain is NADPH-dependent 7-cyano-7-deazaguanine reductase (281 aa).

87–89 (IES) is a substrate binding site. An NADPH-binding site is contributed by 89–90 (SK). Catalysis depends on Cys-188, which acts as the Thioimide intermediate. Asp-195 (proton donor) is an active-site residue. Substrate is bound at residue 227 to 228 (HE). 256–257 (RG) serves as a coordination point for NADPH. The disordered stretch occupies residues 261–281 (INPYRSTEQAKPDHNHRMARQ). Basic and acidic residues predominate over residues 268-281 (EQAKPDHNHRMARQ).

The protein belongs to the GTP cyclohydrolase I family. QueF type 2 subfamily. In terms of assembly, homodimer.

The protein localises to the cytoplasm. The enzyme catalyses 7-aminomethyl-7-carbaguanine + 2 NADP(+) = 7-cyano-7-deazaguanine + 2 NADPH + 3 H(+). The protein operates within tRNA modification; tRNA-queuosine biosynthesis. Its function is as follows. Catalyzes the NADPH-dependent reduction of 7-cyano-7-deazaguanine (preQ0) to 7-aminomethyl-7-deazaguanine (preQ1). This is NADPH-dependent 7-cyano-7-deazaguanine reductase from Vibrio vulnificus (strain CMCP6).